A 341-amino-acid polypeptide reads, in one-letter code: UDP-glucose 4-epimerase (341 aa).

It belongs to the polysaccharide synthase family.

The enzyme catalyses UDP-alpha-D-glucose = UDP-alpha-D-galactose. Functionally, epimerizes UDP-galactose to UDP-glucose. In Rickettsia akari (strain Hartford), this protein is UDP-glucose 4-epimerase (capD).